Here is a 211-residue protein sequence, read N- to C-terminus: Stromal cell-derived factor 2 (211 aa).

The first 18 residues, 1 to 18, serve as a signal peptide directing secretion; sequence MAVVPLLLLGGLWSAVGA. MIR domains lie at 21–75, 83–138, and 139–193; these read LGVV…IRGK, GTPI…VLCN, and GPYW…AMEG.

Its subcellular location is the secreted. The polypeptide is Stromal cell-derived factor 2 (SDF2) (Homo sapiens (Human)).